Here is a 340-residue protein sequence, read N- to C-terminus: Ferrochelatase (340 aa).

Residues His-189 and Glu-292 each coordinate Fe cation.

Belongs to the ferrochelatase family.

Its subcellular location is the cytoplasm. The catalysed reaction is heme b + 2 H(+) = protoporphyrin IX + Fe(2+). The protein operates within porphyrin-containing compound metabolism; protoheme biosynthesis; protoheme from protoporphyrin-IX: step 1/1. Functionally, catalyzes the ferrous insertion into protoporphyrin IX. The chain is Ferrochelatase from Pseudomonas syringae pv. tomato (strain ATCC BAA-871 / DC3000).